The sequence spans 276 residues: Sulfur carrier protein FdhD (276 aa).

Catalysis depends on Cys-120, which acts as the Cysteine persulfide intermediate.

The protein belongs to the FdhD family.

The protein localises to the cytoplasm. Required for formate dehydrogenase (FDH) activity. Acts as a sulfur carrier protein that transfers sulfur from IscS to the molybdenum cofactor prior to its insertion into FDH. This Bordetella parapertussis (strain 12822 / ATCC BAA-587 / NCTC 13253) protein is Sulfur carrier protein FdhD.